The following is a 241-amino-acid chain: Ubiquinone biosynthesis O-methyltransferase (241 aa).

4 residues coordinate S-adenosyl-L-methionine: Arg-44, Gly-64, Asp-85, and Met-129.

It belongs to the methyltransferase superfamily. UbiG/COQ3 family.

The catalysed reaction is a 3-demethylubiquinol + S-adenosyl-L-methionine = a ubiquinol + S-adenosyl-L-homocysteine + H(+). The enzyme catalyses a 3-(all-trans-polyprenyl)benzene-1,2-diol + S-adenosyl-L-methionine = a 2-methoxy-6-(all-trans-polyprenyl)phenol + S-adenosyl-L-homocysteine + H(+). It participates in cofactor biosynthesis; ubiquinone biosynthesis. Functionally, O-methyltransferase that catalyzes the 2 O-methylation steps in the ubiquinone biosynthetic pathway. The protein is Ubiquinone biosynthesis O-methyltransferase of Serratia proteamaculans (strain 568).